Consider the following 885-residue polypeptide: Leucine--tRNA ligase (885 aa).

Positions 48 to 58 (PYPSGKLHMGH) match the 'HIGH' region motif. The 'KMSKS' region signature appears at 639–643 (TMSKS). Position 642 (Lys-642) interacts with ATP.

Belongs to the class-I aminoacyl-tRNA synthetase family.

The protein resides in the cytoplasm. The enzyme catalyses tRNA(Leu) + L-leucine + ATP = L-leucyl-tRNA(Leu) + AMP + diphosphate. The chain is Leucine--tRNA ligase from Bordetella bronchiseptica (strain ATCC BAA-588 / NCTC 13252 / RB50) (Alcaligenes bronchisepticus).